The following is a 129-amino-acid chain: Small ribosomal subunit protein uS11 (129 aa).

The protein belongs to the universal ribosomal protein uS11 family. Part of the 30S ribosomal subunit. Interacts with proteins S7 and S18. Binds to IF-3.

Located on the platform of the 30S subunit, it bridges several disparate RNA helices of the 16S rRNA. Forms part of the Shine-Dalgarno cleft in the 70S ribosome. The polypeptide is Small ribosomal subunit protein uS11 (Maridesulfovibrio salexigens (strain ATCC 14822 / DSM 2638 / NCIMB 8403 / VKM B-1763) (Desulfovibrio salexigens)).